The sequence spans 970 residues: Sodium/calcium exchanger 1 (970 aa).

The first 32 residues, 1–32 (MLRLSLSPTYSLGFHLLAMMTLLISHVDHITA), serve as a signal peptide directing secretion. Residues 33-71 (ETEMVEEGNETGECTGSYYCKKGVILPIWEPQDPSFGDK) are Extracellular-facing. The N-linked (GlcNAc...) asparagine glycan is linked to Asn-41. Residues 72 to 92 (IARATVYFVAMVYMFLGVSII) form a helical membrane-spanning segment. Topologically, residues 93–133 (ADRFMSSIEVITSQEKEITIKKPNGETTKTTVRIWNETVSN) are cytoplasmic. The chain crosses the membrane as a helical span at residues 134 to 154 (LTLMALGSSAPEILLSVIEVC). The Alpha-1 repeat unit spans residues 138–178 (ALGSSAPEILLSVIEVCGHNFTAGDLGPSTIVGSAAFNMFI). The Extracellular portion of the chain corresponds to 155 to 167 (GHNFTAGDLGPST). Asn-157 carries an N-linked (GlcNAc...) asparagine glycan. A helical transmembrane segment spans residues 168 to 188 (IVGSAAFNMFIIIALCVYVVP). Over 189-201 (DGETRKIKHLRVF) the chain is Cytoplasmic. The chain crosses the membrane as a helical span at residues 202–222 (FVTAAWSIFAYTWLYIILSVI). Over 223 to 228 (SPGVVE) the chain is Extracellular. The chain crosses the membrane as a helical span at residues 229–249 (VWEGLLTFFFFPICVVFAWVA). At 250-797 (DRRLLFYKYV…FVPPTEYWNG (548 aa)) the chain is on the cytoplasmic side. Residues 251–270 (RRLLFYKYVYKRYRAGKQRG) form a putative calmodulin-binding region region. Residues Ser-282 and Ser-389 each carry the phosphoserine modification. Calx-beta domains are found at residues 393–493 (VNTE…VHLS) and 524–624 (ATVT…LEIG). Residues Glu-417, Asp-453, Asp-478, Asp-479, Ile-481, Glu-483, Glu-486, Asp-530, Asp-531, Asp-532, Glu-548, Asp-584, Asp-610, Glu-611, Glu-612, and Glu-715 each coordinate Ca(2+). A helical transmembrane segment spans residues 798–818 (WACFIVSILMIGLLTAFIGDL). At 819–821 (ASH) the chain is on the extracellular side. A helical membrane pass occupies residues 822 to 842 (FGCTIGLKDSVTAVVFVALGT). The stretch at 839 to 875 (ALGTSVPDTFASKVAATQDQYADASIGNVTGSNAVNV) is one Alpha-2 repeat. The Cytoplasmic segment spans residues 843 to 871 (SVPDTFASKVAATQDQYADASIGNVTGSN). A helical membrane pass occupies residues 872–892 (AVNVFLGIGVAWSIAAIYHAA). At 893–903 (NGEQFKVSPGT) the chain is on the extracellular side. A helical transmembrane segment spans residues 904-924 (LAFSVTLFTIFAFINVGVLLY). At 925 to 941 (RRRPEIGGELGGPRTAK) the chain is on the cytoplasmic side. The helical transmembrane segment at 942-962 (LLTSCLFVLLWLLYIFFSSLE) threads the bilayer. The Extracellular portion of the chain corresponds to 963–970 (AYCHIKGF).

Belongs to the Ca(2+):cation antiporter (CaCA) (TC 2.A.19) family. SLC8 subfamily.

The protein resides in the cell membrane. The enzyme catalyses Ca(2+)(in) + 3 Na(+)(out) = Ca(2+)(out) + 3 Na(+)(in). With respect to regulation, activated by micromolar levels of Ca(2+). Functionally, mediates the exchange of one Ca(2+) ion against three to four Na(+) ions across the cell membrane, and thereby contributes to the regulation of cytoplasmic Ca(2+) levels and Ca(2+)-dependent cellular processes. Contributes to Ca(2+) transport during excitation-contraction coupling in muscle. In a first phase, voltage-gated channels mediate the rapid increase of cytoplasmic Ca(2+) levels due to release of Ca(2+) stores from the endoplasmic reticulum. SLC8A1 mediates the export of Ca(2+) from the cell during the next phase, so that cytoplasmic Ca(2+) levels rapidly return to baseline. Required for normal embryonic heart development and the onset of heart contractions. The polypeptide is Sodium/calcium exchanger 1 (SLC8A1) (Cavia porcellus (Guinea pig)).